A 382-amino-acid polypeptide reads, in one-letter code: Alanine racemase 1 (382 aa).

The Proton acceptor; specific for D-alanine role is filled by Lys39. At Lys39 the chain carries N6-(pyridoxal phosphate)lysine. Arg138 is a substrate binding site. Residue Tyr265 is the Proton acceptor; specific for L-alanine of the active site. Met312 lines the substrate pocket.

It belongs to the alanine racemase family. Requires pyridoxal 5'-phosphate as cofactor.

It carries out the reaction L-alanine = D-alanine. Its pathway is amino-acid biosynthesis; D-alanine biosynthesis; D-alanine from L-alanine: step 1/1. In terms of biological role, catalyzes the interconversion of L-alanine and D-alanine. May also act on other amino acids. The protein is Alanine racemase 1 (alr1) of Staphylococcus aureus (strain MRSA252).